We begin with the raw amino-acid sequence, 706 residues long: Termination factor NPH-I homolog (706 aa).

The Helicase ATP-binding domain maps to 62–227 (IGQGENTRGL…VPCFNMLSGR (166 aa)). An ATP-binding site is contributed by 75-82 (HQMGMGKT). Positions 168–171 (DEAH) match the DEAH box motif. The 183-residue stretch at 417 to 599 (QCLQPLKVLE…HLNSAFRDLL (183 aa)) folds into the Helicase C-terminal domain.

It belongs to the DEAD box helicase family. DEAH subfamily. As to quaternary structure, part of the viral DNA-directed RNA polymerase that consists of 8 polII-like subunits (RPB1, RPB2, RPB3, RPB5, RPB6, RPB7, RPB9, RPB10), a capping enzyme and a termination factor.

Its subcellular location is the virion. In terms of biological role, putative DNA-dependent ATPase required for providing the needed energy to achieve the termination of early transcripts. This Ornithodoros (relapsing fever ticks) protein is Termination factor NPH-I homolog.